The sequence spans 90 residues: UPF0223 protein lwe1035 (90 aa).

The protein belongs to the UPF0223 family.

The polypeptide is UPF0223 protein lwe1035 (Listeria welshimeri serovar 6b (strain ATCC 35897 / DSM 20650 / CCUG 15529 / CIP 8149 / NCTC 11857 / SLCC 5334 / V8)).